Reading from the N-terminus, the 368-residue chain is Glutaminyl-peptide cyclotransferase (368 aa).

The signal sequence occupies residues 1-33 (MARERRDSKAATFFCLAWALCLALPGFPQHVSG). N-linked (GlcNAc...) asparagine glycosylation is present at Asn-53. An intrachain disulfide couples Cys-143 to Cys-169. Position 164 (Asp-164) interacts with Zn(2+). Glu-207 (proton acceptor) is an active-site residue. Glu-208 contributes to the Zn(2+) binding site. Asp-254 functions as the Proton acceptor in the catalytic mechanism. N-linked (GlcNAc...) asparagine glycosylation occurs at Asn-292. His-336 is a Zn(2+) binding site. Asn-352 carries an N-linked (GlcNAc...) asparagine glycan.

Belongs to the glutaminyl-peptide cyclotransferase family. As to expression, expressed by the venom gland.

It is found in the secreted. It catalyses the reaction N-terminal L-glutaminyl-[peptide] = N-terminal 5-oxo-L-prolyl-[peptide] + NH4(+). Its function is as follows. Responsible for the biosynthesis of pyroglutamyl peptides. Has a bias against acidic and tryptophan residues adjacent to the N-terminal glutaminyl residue and a lack of importance of chain length after the second residue. Also catalyzes N-terminal pyroglutamate formation. The protein is Glutaminyl-peptide cyclotransferase (QPCT) of Gloydius blomhoffii (Mamushi).